The primary structure comprises 422 residues: O-methyltransferase kk1A (422 aa).

Asp277 contacts S-adenosyl-L-methionine. The Proton acceptor role is filled by His320.

The protein belongs to the class I-like SAM-binding methyltransferase superfamily. Cation-independent O-methyltransferase family.

It participates in secondary metabolite biosynthesis. Its function is as follows. O-methyltransferase; part of the gene cluster that mediates the biosynthesis of KK-1, a novel cyclic depsipeptide with 10 residues which is a promising active compound with high activity against many plant pathogens, especially Botrytis cinerea. Within the pathway, kk1A is responsible for the O-methylation of tyrosine as a free amino acid before its activation as an aminoacyl-AMP by the corresponding A domain of kk1B. The nonribosomal peptide synthetase (NRPS) kk1B catalyzes the elongation and cyclization of the decapeptide chain composed of 1 D-lactic acid residue (D-Lac), 1 pipecolic acid residue (Pip), 1 aspartic acid residue (Asp), 1 isoleucine residue (Ile), 1 glycine residue (Gly), 1 tyrosine residue (Tyr) and 4 valine residues (Val). The Asp, Ile and 3 Val residues are N-methylated by the 5 methyltransferase domains from the NRPS (found in modules 3, 5, 6, 7 and 9), whereas the Tyr residue is O-methylated by the cluster encoded O-methyltransferase kk1A. The thioesterase kk1J is likely to be involved in the corrective mechanism of peptide chain synthesis. The D-lactate dehydrogenase kk1H is involved in the synthesis of D-lactic acid from pyruvic acid, which is recognized by the A domain of the first kk1B module. The pyrroline-5-carboxylate reductase kk1I is involved in the synthesis of the L-pipecolic acid residue of KK-1 from delta-1-pyrroline-5-carboxylate (P5C), a metabolic intermediate of lysine. It is still unclear how kk1C and kk1D are involved in the production of KK-1. This chain is O-methyltransferase kk1A, found in Curvularia clavata.